The primary structure comprises 505 residues: MLFLNAKFIDLDLGENAVIVNDEDLKGTSYYPQDRVLIESHAGAVIGNIYSTKTMVKKGEVGMLVKELKEVSISEGEEVKLRHAEKPESIPFIKKKMDGQVLNPHEIRTIIDEIVSKKLSNIELSAFVSSTYINGMNMDEISEMTKRIAETGDMISWEKSLVVDIHSIGGVPGNKYALLSIPILAAAGITIPKTSSRAITSPAGTADVMEVLTNVELKEEEIKRIVKTTNGCLAWGGGVNLAPADDIIINVERPVSIDPQPQLLASVMAKKIATGIKYTVIDIPVGKGVKIKNEAEGAKLARKFIELGELLNIKVECVLTYGGQPLGRAIGPALEAREAIEALQDPKNAPKSLIEKALSLAGILLELGGAAQIGEGQKLAWEILESGRALEKFNQIITEQGGTPKKPEEIELGEYVEEIIAPIDGYITDISNTAITNVVKEAGAPRDKKAGILLNSKIGNQVKQGDILYTIYSGSEERLVSAVNLARRVYPVKVEGMLIERISKF.

AMP contacts are provided by residues glycine 170, 196-201 (SRAITS), and threonine 205. Catalysis depends on aspartate 258, which acts as the Proton donor. Residues serine 266 and lysine 290 each coordinate AMP.

Belongs to the thymidine/pyrimidine-nucleoside phosphorylase family. Type 2 subfamily.

The catalysed reaction is AMP + phosphate = alpha-D-ribose 1,5-bisphosphate + adenine. The enzyme catalyses CMP + phosphate = cytosine + alpha-D-ribose 1,5-bisphosphate. It carries out the reaction UMP + phosphate = alpha-D-ribose 1,5-bisphosphate + uracil. In terms of biological role, catalyzes the conversion of AMP and phosphate to adenine and ribose 1,5-bisphosphate (R15P). Exhibits phosphorylase activity toward CMP and UMP in addition to AMP. Functions in an archaeal AMP degradation pathway, together with R15P isomerase and RubisCO. In Methanococcus maripaludis (strain C6 / ATCC BAA-1332), this protein is AMP phosphorylase.